The chain runs to 1105 residues: Serine/threonine-protein kinase 4 homolog B (1105 aa).

In terms of domain architecture, Protein kinase spans 23–274 (FDLIECLGRG…AKDLLKHSFF (252 aa)). Residues 29–37 (LGRGSFGSV) and Lys-52 each bind ATP. The Proton acceptor role is filled by Asp-142. 3 disordered regions span residues 348–396 (STQI…TKNN), 411–482 (SSSA…RQPA), and 495–541 (PSFG…SLPL). Composition is skewed to low complexity over residues 358–396 (QAQQQQQQAQQQQQQQQQQQQQYQPPSPNNNNRTTTKNN) and 411–437 (SSSASASTSPSPSSISSNGNKSGTTTN). Over residues 438–458 (DYHTGNGRTSSSSPQFGLQHQ) the composition is skewed to polar residues. Composition is skewed to low complexity over residues 459–473 (NSSNSFPSSPNTVPS) and 513–541 (PIGSPITKRPTPTMQSSTTTTTSSSSLPL). The segment at 516–1105 (SPITKRPTPT…SEFDLDFYNN (590 aa)) is calpain-like cysteine protease-like. Domain III regions lie at residues 641-668 (EVSAKITMEPGYYVIIPATFEPNQEGSF), 791-830 (VHTQQQMPPGCYIIVPCTYDSRQEGSFTLTCYSDCQQGSI), 836-972 (SEQI…NVIQ), and 1076-1103 (VVIPSTFEPNIQDSFNLTIYSEFDLDFY).

In the N-terminal section; belongs to the protein kinase superfamily. STE Ser/Thr protein kinase family. STE20 subfamily. The protein in the C-terminal section; belongs to the peptidase C2 family. Mn(2+) serves as cofactor.

The enzyme catalyses L-seryl-[protein] + ATP = O-phospho-L-seryl-[protein] + ADP + H(+). The catalysed reaction is L-threonyl-[protein] + ATP = O-phospho-L-threonyl-[protein] + ADP + H(+). In terms of biological role, probable serine/threonine-protein kinase. The sequence is that of Serine/threonine-protein kinase 4 homolog B (krsB) from Dictyostelium discoideum (Social amoeba).